Here is a 154-residue protein sequence, read N- to C-terminus: Dau c 1 isoallergen Dau c 1.0301 (154 aa).

The protein belongs to the BetVI family. In terms of tissue distribution, expressed in roots.

This Daucus carota (Wild carrot) protein is Dau c 1 isoallergen Dau c 1.0301.